The following is a 295-amino-acid chain: UDP-3-O-acyl-N-acetylglucosamine deacetylase (295 aa).

Zn(2+)-binding residues include H75, H232, and D236. Residue H259 is the Proton donor of the active site.

This sequence belongs to the LpxC family. It depends on Zn(2+) as a cofactor.

It catalyses the reaction a UDP-3-O-[(3R)-3-hydroxyacyl]-N-acetyl-alpha-D-glucosamine + H2O = a UDP-3-O-[(3R)-3-hydroxyacyl]-alpha-D-glucosamine + acetate. Its pathway is glycolipid biosynthesis; lipid IV(A) biosynthesis; lipid IV(A) from (3R)-3-hydroxytetradecanoyl-[acyl-carrier-protein] and UDP-N-acetyl-alpha-D-glucosamine: step 2/6. In terms of biological role, catalyzes the hydrolysis of UDP-3-O-myristoyl-N-acetylglucosamine to form UDP-3-O-myristoylglucosamine and acetate, the committed step in lipid A biosynthesis. This is UDP-3-O-acyl-N-acetylglucosamine deacetylase from Helicobacter pylori (strain J99 / ATCC 700824) (Campylobacter pylori J99).